Here is a 314-residue protein sequence, read N- to C-terminus: Ribosomal RNA small subunit methyltransferase H (314 aa).

S-adenosyl-L-methionine-binding positions include Gly-36–His-38, Asp-56, Phe-80, Asp-102, and Gln-109.

The protein belongs to the methyltransferase superfamily. RsmH family.

It localises to the cytoplasm. It catalyses the reaction cytidine(1402) in 16S rRNA + S-adenosyl-L-methionine = N(4)-methylcytidine(1402) in 16S rRNA + S-adenosyl-L-homocysteine + H(+). Its function is as follows. Specifically methylates the N4 position of cytidine in position 1402 (C1402) of 16S rRNA. In Citrobacter koseri (strain ATCC BAA-895 / CDC 4225-83 / SGSC4696), this protein is Ribosomal RNA small subunit methyltransferase H.